The primary structure comprises 210 residues: Thymidylate kinase (210 aa).

Residue 10–17 participates in ATP binding; it reads GPDGAGKT.

The protein belongs to the thymidylate kinase family.

It catalyses the reaction dTMP + ATP = dTDP + ADP. Phosphorylation of dTMP to form dTDP in both de novo and salvage pathways of dTTP synthesis. The sequence is that of Thymidylate kinase from Geobacillus sp. (strain WCH70).